A 289-amino-acid chain; its full sequence is Borealin (289 aa).

Positions 1–58 (MAPKKRSSRGTRTNTLRSRKLASFLKDFDREVQVRTKQIESDRQTLLKEVENLYNIEI) are required for interaction with INCENP. The segment at 1–88 (MAPKKRSSRG…NKQALEEAAK (88 aa)) is required for centromere localization. The required for interaction with SENP3 stretch occupies residues 1–150 (MAPKKRSSRG…KKSHKNLRSA (150 aa)). Residues 10 to 109 (GTRTNTLRSR…TAEAIQTPLK (100 aa)) form a required to form a minimal CPC core complex that localizes to the central spindle and midbody and properly executes the role of the CPC during cytokinesis region. The interval 20–78 (KLASFLKDFDREVQVRTKQIESDRQTLLKEVENLYNIEILRLPKALQGMKWLDYFALGG) is required for interaction with INCENP and BIRC5. Arg91 carries the citrulline modification. The residue at position 94 (Thr94) is a Phosphothreonine; by TTK. Thr106 bears the Phosphothreonine mark. Ser110 carries the post-translational modification Phosphoserine. Residues 122–173 (SIKEEEEEEEEGGGGGGRTKKSHKNLRSAKVKRCLPSKKRTQSIQGRGRSKR) are disordered. A compositionally biased stretch (acidic residues) spans 123-133 (IKEEEEEEEEG). A compositionally biased stretch (basic residues) spans 139-162 (RTKKSHKNLRSAKVKRCLPSKKRT). Residue Lys145 forms a Glycyl lysine isopeptide (Lys-Gly) (interchain with G-Cter in SUMO2) linkage. A Phosphoserine modification is found at Ser175. 2 positions are modified to phosphothreonine: Thr198 and Thr213. Ser228, Ser233, Ser247, and Ser253 each carry phosphoserine.

It belongs to the borealin family. May form homooligomers and homodimers. Component of the chromosomal passenger complex (CPC) composed of at least BIRC5/survivin, CDCA8/borealin, INCENP, AURKB or AURKC; in the complex forms a triple-helix bundle-based subcomplex with INCENP and BIRC5. Interacts with SENP3, UBE2I and RANBP2. Interacts (phosphorylated) with SGO1 and SGO2A; the association is dependent on CDK1. Phosphorylated by TTK, essentially at Thr-94. Phosphorylation (probably by CDK1) promotes targeting of the CPC to centromeric DNA. In terms of processing, sumoylated by UBE2I and RANBP2. Desumoylated by SENP3 through the removal of SUMO2 and SUMO3. Post-translationally, citrullinated by PADI4.

The protein localises to the nucleus. It localises to the nucleolus. The protein resides in the cytoplasm. Its subcellular location is the chromosome. It is found in the centromere. The protein localises to the cytoskeleton. It localises to the spindle. Component of the chromosomal passenger complex (CPC), a complex that acts as a key regulator of mitosis. The CPC complex has essential functions at the centromere in ensuring correct chromosome alignment and segregation and is required for chromatin-induced microtubule stabilization and spindle assembly. In the complex, it may be required to direct the CPC to centromeric DNA. Major effector of the TTK kinase in the control of attachment-error-correction and chromosome alignment. This chain is Borealin (Cdca8), found in Mus musculus (Mouse).